Reading from the N-terminus, the 236-residue chain is Ribose-5-phosphate isomerase A 2 (236 aa).

Substrate contacts are provided by residues 31–34, 86–89, and 99–102; these read SGTT, DGPD, and KGGG. The Proton acceptor role is filled by Glu108. Substrate is bound at residue Lys126.

It belongs to the ribose 5-phosphate isomerase family. As to quaternary structure, homodimer.

It catalyses the reaction aldehydo-D-ribose 5-phosphate = D-ribulose 5-phosphate. It participates in carbohydrate degradation; pentose phosphate pathway; D-ribose 5-phosphate from D-ribulose 5-phosphate (non-oxidative stage): step 1/1. Catalyzes the reversible conversion of ribose-5-phosphate to ribulose 5-phosphate. The protein is Ribose-5-phosphate isomerase A 2 of Yersinia pestis.